A 412-amino-acid chain; its full sequence is Thyroxine-binding globulin (412 aa).

An N-terminal signal peptide occupies residues 1–16 (MPLFLYMVLLVLGIHC). 5 N-linked (GlcNAc...) asparagine glycosylation sites follow: N20, N35, N98, N164, and N252. Thyroxine is bound by residues N292 and K395.

It belongs to the serpin family. Expressed by the liver and secreted in plasma.

It is found in the secreted. Functionally, major thyroid hormone transport protein in serum. The chain is Thyroxine-binding globulin (SERPINA7) from Sus scrofa (Pig).